Reading from the N-terminus, the 341-residue chain is Serpentine receptor class epsilon-8 (341 aa).

A run of 7 helical transmembrane segments spans residues 37 to 57 (VGFLVFSWIEFLYLFYLFIFI), 64 to 86 (LTFLFMNYGGQYFCSMLSRCIIV), 101 to 123 (WILVANFARTVCLFIAMYILPIF), 143 to 163 (IWVSLMILSIFHPLVFASAIA), 169 to 189 (IPVVVHVISFFIVNIIGYIGI), 235 to 255 (VQISILFFNIGCCSILLMDHF), and 264 to 284 (WSYVCFNFFALVYGITVPIIL).

Belongs to the nematode receptor-like protein sre family.

It is found in the membrane. The sequence is that of Serpentine receptor class epsilon-8 (sre-8) from Caenorhabditis elegans.